The chain runs to 153 residues: Ribosomal RNA large subunit methyltransferase H (153 aa).

S-adenosyl-L-methionine is bound by residues L70, G102, and 121-126 (FSKMTF).

This sequence belongs to the RNA methyltransferase RlmH family. Homodimer.

The protein resides in the cytoplasm. The catalysed reaction is pseudouridine(1915) in 23S rRNA + S-adenosyl-L-methionine = N(3)-methylpseudouridine(1915) in 23S rRNA + S-adenosyl-L-homocysteine + H(+). Its function is as follows. Specifically methylates the pseudouridine at position 1915 (m3Psi1915) in 23S rRNA. The polypeptide is Ribosomal RNA large subunit methyltransferase H (Desulfotalea psychrophila (strain LSv54 / DSM 12343)).